Consider the following 129-residue polypeptide: Serum amyloid A-2 protein (129 aa).

The N-terminal stretch at 1-18 (MKLFTGLIFCSLVLGVSS) is a signal peptide. At Gln-19 the chain carries Pyrrolidone carboxylic acid. Positions 92–129 (GDSGHGVEDSKADQAANEWGRSGKDPNHFRPSGLPDKY) are disordered.

It belongs to the SAA family. As to quaternary structure, apolipoprotein of the HDL complex. As to expression, expressed by the liver; secreted in plasma.

The protein localises to the secreted. Major acute phase reactant. This Neovison vison (American mink) protein is Serum amyloid A-2 protein (SAA2P0DJI9).